The primary structure comprises 234 residues: Putative N-acetylmannosamine-6-phosphate 2-epimerase (234 aa).

This sequence belongs to the NanE family.

It carries out the reaction an N-acyl-D-glucosamine 6-phosphate = an N-acyl-D-mannosamine 6-phosphate. Its pathway is amino-sugar metabolism; N-acetylneuraminate degradation; D-fructose 6-phosphate from N-acetylneuraminate: step 3/5. In terms of biological role, converts N-acetylmannosamine-6-phosphate (ManNAc-6-P) to N-acetylglucosamine-6-phosphate (GlcNAc-6-P). This Klebsiella pneumoniae (strain 342) protein is Putative N-acetylmannosamine-6-phosphate 2-epimerase.